Consider the following 326-residue polypeptide: Cytosolic sulfotransferase 7 (326 aa).

72-77 (KSGTTW) contacts 3'-phosphoadenylyl sulfate. His-138 (proton acceptor) is an active-site residue. 3'-phosphoadenylyl sulfate-binding positions include Arg-160, Ser-168, Tyr-226, and 292-294 (RKG).

It belongs to the sulfotransferase 1 family.

The protein resides in the cytoplasm. In terms of biological role, sulfotransferase that utilizes 3'-phospho-5'-adenylyl sulfate (PAPS) as sulfonate donor. This is Cytosolic sulfotransferase 7 (SOT7) from Arabidopsis thaliana (Mouse-ear cress).